A 253-amino-acid chain; its full sequence is Methionine aminopeptidase (253 aa).

Position 78 (His-78) interacts with substrate. Residues Asp-95, Asp-106, and His-169 each coordinate a divalent metal cation. His-176 is a binding site for substrate. Residues Glu-206 and Glu-237 each contribute to the a divalent metal cation site.

This sequence belongs to the peptidase M24A family. Methionine aminopeptidase type 1 subfamily. As to quaternary structure, monomer. It depends on Co(2+) as a cofactor. The cofactor is Zn(2+). Mn(2+) is required as a cofactor. Fe(2+) serves as cofactor.

It catalyses the reaction Release of N-terminal amino acids, preferentially methionine, from peptides and arylamides.. In terms of biological role, removes the N-terminal methionine from nascent proteins. The N-terminal methionine is often cleaved when the second residue in the primary sequence is small and uncharged (Met-Ala-, Cys, Gly, Pro, Ser, Thr, or Val). Requires deformylation of the N(alpha)-formylated initiator methionine before it can be hydrolyzed. This Helicobacter pylori (strain J99 / ATCC 700824) (Campylobacter pylori J99) protein is Methionine aminopeptidase.